The sequence spans 109 residues: Phosphoribosyl-ATP pyrophosphatase (109 aa).

This sequence belongs to the PRA-PH family.

It is found in the cytoplasm. The catalysed reaction is 1-(5-phospho-beta-D-ribosyl)-ATP + H2O = 1-(5-phospho-beta-D-ribosyl)-5'-AMP + diphosphate + H(+). It participates in amino-acid biosynthesis; L-histidine biosynthesis; L-histidine from 5-phospho-alpha-D-ribose 1-diphosphate: step 2/9. In Marinobacter nauticus (strain ATCC 700491 / DSM 11845 / VT8) (Marinobacter aquaeolei), this protein is Phosphoribosyl-ATP pyrophosphatase.